The following is a 434-amino-acid chain: Ribosomal protein uS12 methylthiotransferase RimO (434 aa).

The MTTase N-terminal domain maps to 1-107 (MHLGCEKNLV…ILNVLQRIEQ (107 aa)). Residues cysteine 5, cysteine 41, cysteine 70, cysteine 145, cysteine 149, and cysteine 152 each contribute to the [4Fe-4S] cluster site. The region spanning 131–360 (TTGKAVAYLK…ISIQQPIAEL (230 aa)) is the Radical SAM core domain. The TRAM domain occupies 363-434 (QNWIGRTVDV…DLYDLTGQVV (72 aa)).

This sequence belongs to the methylthiotransferase family. RimO subfamily. [4Fe-4S] cluster is required as a cofactor.

The protein localises to the cytoplasm. It catalyses the reaction L-aspartate(89)-[ribosomal protein uS12]-hydrogen + (sulfur carrier)-SH + AH2 + 2 S-adenosyl-L-methionine = 3-methylsulfanyl-L-aspartate(89)-[ribosomal protein uS12]-hydrogen + (sulfur carrier)-H + 5'-deoxyadenosine + L-methionine + A + S-adenosyl-L-homocysteine + 2 H(+). Catalyzes the methylthiolation of an aspartic acid residue of ribosomal protein uS12. This is Ribosomal protein uS12 methylthiotransferase RimO from Prochlorococcus marinus (strain SARG / CCMP1375 / SS120).